Consider the following 274-residue polypeptide: MQRLIEGLQKFREGYFSSHRDLFEQLSHGQHPRILFICCSDSRVDPNLITQSEVGDLFVIRNAGNIIPPYGAANGGEGAAMEYALVALEINQIIVCGHSHCGAMKGLLKLNSLQEKLPLVYDWLKHTEATRRLVLDNYSHLEGEDLIEVAVAENILTQLKNLQTYPAIHSRLHRGDLSLHGWIYRIEEGEVLAYDGVLHDFVAPQSRINALEPEDEYAPHPNSPLISYDAFKVPGKERPGREKATESPAPQLSPLPGFGHLPREQAERIYRGSR.

Residues Cys-39, His-98, and Cys-101 each contribute to the Zn(2+) site. The tract at residues 214-274 (EDEYAPHPNS…QAERIYRGSR (61 aa)) is disordered. Basic and acidic residues-rich tracts occupy residues 234-245 (PGKERPGREKAT) and 261-274 (LPRE…RGSR).

The protein belongs to the beta-class carbonic anhydrase family. As to quaternary structure, a hexamer formed by a trimer of dimers. Interacts with the first 260 residues of CcmM; both the N-terminal 206 residues and the C-terminal tail contribute to CcmM binding. Interacts with full-length and the N-terminal 249 residues of CcmM. A probable CcmM-CcaA-CcmN complex as well as a CcaA-RuBisCO-CcmM complex can also be isolated. Zn(2+) is required as a cofactor.

It is found in the carboxysome. The catalysed reaction is hydrogencarbonate + H(+) = CO2 + H2O. Its activity is regulated as follows. Inhibited by ethoxyzolamide. In terms of biological role, reversible hydration of carbon dioxide. Essential to photosynthetic carbon dioxide fixation, supplies CO(2) to RuBisCO (ribulose bisphosphate carboxylase, rbcL-rbcS) in the carboxysome. The protein is Carbonic anhydrase of Synechocystis sp. (strain ATCC 27184 / PCC 6803 / Kazusa).